Here is a 259-residue protein sequence, read N- to C-terminus: Translation initiation factor IF-2, chloroplastic (259 aa).

Positions Leu171 to Ile259 constitute a tr-type G domain. Gly180–Thr187 is a binding site for GTP.

Belongs to the TRAFAC class translation factor GTPase superfamily. Classic translation factor GTPase family. IF-2 subfamily.

The protein resides in the plastid. The protein localises to the chloroplast. In terms of biological role, one of the essential components for the initiation of protein synthesis. Protects formylmethionyl-tRNA from spontaneous hydrolysis and promotes its binding to the 30S ribosomal subunits. Also involved in the hydrolysis of GTP during the formation of the 70S ribosomal complex. This is Translation initiation factor IF-2, chloroplastic (infB) from Galdieria sulphuraria (Red alga).